The primary structure comprises 118 residues: Large ribosomal subunit protein bL20 (118 aa).

The protein belongs to the bacterial ribosomal protein bL20 family.

Functionally, binds directly to 23S ribosomal RNA and is necessary for the in vitro assembly process of the 50S ribosomal subunit. It is not involved in the protein synthesizing functions of that subunit. In Azotobacter vinelandii, this protein is Large ribosomal subunit protein bL20.